A 352-amino-acid polypeptide reads, in one-letter code: Protein-glutamate methylesterase/protein-glutamine glutaminase (352 aa).

Residues 4–121 (RVLIVDDSAT…YDGIDEIQKE (118 aa)) enclose the Response regulatory domain. A 4-aspartylphosphate modification is found at Asp-55. The region spanning 159 to 351 (AQTTNKLIAI…VKIASLLSER (193 aa)) is the CheB-type methylesterase domain. Catalysis depends on residues Ser-171, His-197, and Asp-293.

The protein belongs to the CheB family. In terms of processing, phosphorylated by CheA. Phosphorylation of the N-terminal regulatory domain activates the methylesterase activity.

It is found in the cytoplasm. It carries out the reaction [protein]-L-glutamate 5-O-methyl ester + H2O = L-glutamyl-[protein] + methanol + H(+). The enzyme catalyses L-glutaminyl-[protein] + H2O = L-glutamyl-[protein] + NH4(+). Its function is as follows. Involved in chemotaxis. Part of a chemotaxis signal transduction system that modulates chemotaxis in response to various stimuli. Catalyzes the demethylation of specific methylglutamate residues introduced into the chemoreceptors (methyl-accepting chemotaxis proteins or MCP) by CheR. Also mediates the irreversible deamidation of specific glutamine residues to glutamic acid. The chain is Protein-glutamate methylesterase/protein-glutamine glutaminase from Sulfurimonas denitrificans (strain ATCC 33889 / DSM 1251) (Thiomicrospira denitrificans (strain ATCC 33889 / DSM 1251)).